Reading from the N-terminus, the 308-residue chain is Regulating synaptic membrane exocytosis protein 3 (308 aa).

Positions 86 to 120 (STETGIAVEMRSRVTRQGSRESTDGSTNSNSSDGT) are disordered. The segment covering 109-120 (DGSTNSNSSDGT) has biased composition (low complexity). Residues 156-274 (PMGDVHIAIM…DLSAAVTGWY (119 aa)) form the C2 domain. 2 positions are modified to phosphoserine: serine 295 and serine 298.

Binds PPFIA3. Does not bind RAB3.

The protein resides in the synapse. Regulates synaptic membrane exocytosis. The protein is Regulating synaptic membrane exocytosis protein 3 (RIMS3) of Homo sapiens (Human).